A 148-amino-acid polypeptide reads, in one-letter code: Snaclec stejaggregin-A subunit beta-3 (148 aa).

The signal sequence occupies residues 1-23 (MGRFISVSFGLLVVFLSLSGAGA). Cysteines 27 and 38 form a disulfide. One can recognise a C-type lectin domain in the interval 34 to 145 (YDLYCYKVFK…CSRTHYVVCK (112 aa)). N-linked (GlcNAc...) asparagine glycans are attached at residues Asn47 and Asn78. Disulfide bonds link Cys55/Cys144 and Cys121/Cys136.

This sequence belongs to the snaclec family. As to quaternary structure, heteromultimer; disulfide-linked. As to expression, expressed by the venom gland.

It is found in the secreted. In terms of biological role, interferes with one step of hemostasis (modulation of platelet aggregation, or coagulation cascade, for example). In Trimeresurus stejnegeri (Chinese green tree viper), this protein is Snaclec stejaggregin-A subunit beta-3.